Reading from the N-terminus, the 354-residue chain is Heat-inducible transcription repressor HrcA (354 aa).

Belongs to the HrcA family.

In terms of biological role, negative regulator of class I heat shock genes (grpE-dnaK-dnaJ and groELS operons). Prevents heat-shock induction of these operons. In Novosphingobium aromaticivorans (strain ATCC 700278 / DSM 12444 / CCUG 56034 / CIP 105152 / NBRC 16084 / F199), this protein is Heat-inducible transcription repressor HrcA.